Consider the following 343-residue polypeptide: Selenide, water dikinase (343 aa).

Sec16 is an active-site residue. Sec16 is a non-standard amino acid (selenocysteine). Residues Lys19 and 46–48 (GAE) each bind ATP. Asp49 lines the Mg(2+) pocket. ATP is bound by residues Asp66, Asp89, and 137–139 (GHT). Mg(2+) is bound at residue Asp89. Asp225 is a binding site for Mg(2+).

The protein belongs to the selenophosphate synthase 1 family. Class I subfamily. Homodimer. Mg(2+) is required as a cofactor.

It carries out the reaction hydrogenselenide + ATP + H2O = selenophosphate + AMP + phosphate + 2 H(+). Its function is as follows. Synthesizes selenophosphate from selenide and ATP. The chain is Selenide, water dikinase from Geobacter sp. (strain M21).